Here is a 1981-residue protein sequence, read N- to C-terminus: Nonribosomal peptide synthetase rstn8 (1981 aa).

The tract at residues 251-638 is adenylation; it reads SYAALEQESA…ELGEIEYQAS (388 aa). The 78-residue stretch at 763–840 folds into the Carrier 1 domain; sequence HHAGQKYDEM…ELFHRSQKTP (78 aa). At S800 the chain carries O-(pantetheine 4'-phosphoryl)serine. Residues 883–1293 form a condensation 1 region; sequence EDIYPCSPLQ…DASMGTILSQ (411 aa). In terms of domain architecture, Carrier 2 spans 1438–1514; sequence EPLLPLEATL…CLASTLNSRP (77 aa). The residue at position 1475 (S1475) is an O-(pantetheine 4'-phosphoryl)serine. Positions 1586–1978 are condensation 1; that stretch reads EEQIDLVSFA…TFAQSIERII (393 aa). The segment at 1754–1774 is disordered; it reads HHHHQHEGRQHHGASETNGNR.

This sequence belongs to the NRP synthetase family. It depends on pantetheine 4'-phosphate as a cofactor.

It catalyses the reaction 2 L-tryptophan = cyclo(L-Trp-L-Trp) + 2 H2O. The protein operates within alkaloid biosynthesis. Nonribosomal peptide synthetase; part of the gene cluster that mediates the biosynthesis of okaramine B, a prenylated indole alkaloid that possesses an unusual octacyclic ring system, including a four-membered azetidine ring and an eight-membered azocine ring, and that exhibits insecticidal activity against silkworm larvae. Within the pathway, okaA acts as a bimodular non-ribosomal peptide synthetase (NRPS) that condenses two tryptophan molecules into cyclo(L-Trp-L-Trp). Prenylation by the prenyltransferase okaC then leads to the formation of cyclo(N8-(alpha,alpha-dimethylallyl)-L-Trp-6a-(alpha,alpha-dime-thylallyl)-L-Trp). This is followed by indole 2,3-epoxidation by the FAD-dependent monooxygenase okaB to facilitate the formation of the hexahydropyrrolo[2,3-b]indole (HPI) moiety of okaramine C. The cytochrome P450 monooxygenase okaD then likely catalyzes formation of the eight-membered ring of okaramine A. The dioxygenase okaE further forms the unusual 2-dimethyl-3-methyl-azetidine ring to yield 12-deshydroxyl okaramine E, as well as the hydroxylation of 12-deshydroxyl okaramine E to produce okaramine E. The cytochrome P450 monoxygenase okaG converts 12-deshydroxyl okaramine E into 3-desmethyl okaramine B which is further methylated by the methyltransferase okaF into okaramine B. In a shunt pathway, okaG and okaF together are also able to convert okaramine E into okaramine D. Okaramine H is produced by nonenzymatic conversion from okaramine A. The sequence is that of Nonribosomal peptide synthetase rstn8 from Penicillium ochrochloron.